The primary structure comprises 176 residues: MERSQKEVLIGSVRQKFERMSSAVFLDFKGMNVEAVTKLRDEFRKSGVEYRVVKNTLVRHAIKEHPWAKTLSKSLTGMTGVAWSYEDPSAAAKVVKAFRKDNQKLQIKAGLIEGQILSGDAVETQLATMPGKDELRATLLATLQAPLQQFVQQLNAPLQNFAYLLKAKEEEAGKQA.

Belongs to the universal ribosomal protein uL10 family. In terms of assembly, part of the ribosomal stalk of the 50S ribosomal subunit. The N-terminus interacts with L11 and the large rRNA to form the base of the stalk. The C-terminus forms an elongated spine to which L12 dimers bind in a sequential fashion forming a multimeric L10(L12)X complex.

Its function is as follows. Forms part of the ribosomal stalk, playing a central role in the interaction of the ribosome with GTP-bound translation factors. The chain is Large ribosomal subunit protein uL10 from Sorangium cellulosum (strain So ce56) (Polyangium cellulosum (strain So ce56)).